Consider the following 27-residue polypeptide: Secretin (27 aa).

Residue Leu-27 is modified to Leucine amide.

It belongs to the glucagon family.

Its subcellular location is the secreted. Its function is as follows. Hormone involved in different processes, such as regulation of the pH of the duodenal content, food intake and water homeostasis. Exerts its biological effects by binding to secretin receptor (SCTR), a G-protein coupled receptor expressed in the basolateral domain of several cells. Acts as a key gastrointestinal hormone by regulating the pH of the duodenal content. Secreted by S cells of the duodenum in the crypts of Lieberkuehn and regulates the pH of the duodenum by (1) inhibiting the secretion of gastric acid from the parietal cells of the stomach and (2) stimulating the production of bicarbonate (NaHCO(3)) from the ductal cells of the pancreas. Production of bicarbonate is essential to neutralize the pH and ensure no damage is done to the small intestine by the gastric acid. In addition to regulating the pH of the duodenal content, plays a central role in diet induced thermogenesis: acts as a non-sympathetic brown fat (BAT) activator mediating prandial thermogenesis, which consequentially induces satiation. Mechanistically, secretin released by the gut after a meal binds to secretin receptor (SCTR) in brown adipocytes, activating brown fat thermogenesis by stimulating lipolysis, which is sensed in the brain and promotes satiation. Also able to stimulate lipolysis in white adipocytes. Also plays an important role in cellular osmoregulation: released into the systemic circulation in response to hyperosmolality and acts at different levels in the hypothalamus, pituitary and kidney to regulate water homeostasis. Also plays a role in the central nervous system, possibly by acting as a neuropeptide hormone: required for hippocampal synaptic function and neural progenitor cells maintenance. The polypeptide is Secretin (Oryctolagus cuniculus (Rabbit)).